The primary structure comprises 228 residues: Ribosomal RNA small subunit methyltransferase G (228 aa).

S-adenosyl-L-methionine is bound by residues G82, L87, 105-107, 133-134, and R147; these read DAT and VE.

It belongs to the methyltransferase superfamily. RNA methyltransferase RsmG family.

It localises to the cytoplasm. Specifically methylates the N7 position of a guanine in 16S rRNA. This chain is Ribosomal RNA small subunit methyltransferase G, found in Pelodictyon phaeoclathratiforme (strain DSM 5477 / BU-1).